The sequence spans 244 residues: uncharacterized protein (244 aa).

An N-terminal signal peptide occupies residues 1 to 19 (MRGIFFLILILNFIGLIFS). 2 N-linked (GlcNAc...) asparagine glycosylation sites follow: Asn-45 and Asn-77. 2 ShKT domains span residues 67–105 (CNNP…CGKC) and 113–149 (CSDK…CNRC). Intrachain disulfides connect Cys-113-Cys-149, Cys-122-Cys-142, and Cys-129-Cys-146. Asn-152 and Asn-158 each carry an N-linked (GlcNAc...) asparagine glycan. 2 ShKT domains span residues 171–205 (CTDL…CNAC) and 208–243 (CEDA…CNIC). 6 disulfides stabilise this stretch: Cys-171-Cys-205, Cys-178-Cys-198, Cys-185-Cys-202, Cys-208-Cys-243, Cys-215-Cys-236, and Cys-224-Cys-240.

This is an uncharacterized protein from Caenorhabditis elegans.